The sequence spans 178 residues: MEKSGGRIVMDEIRSFEKAHLFDLGHPLLNRIADSFVKAAGVGALQAVSREAYFTVVDGAGFDSNNVGPPSEITGNKKHRFPNLRGESSKSLDALVKNTGKESLQWGLAAGLYSGITYGMTEVRGGAHDWRNSAVAGALTGAAMAMTTSERTSHEQVVQSALTGAAISTAANLLSSVF.

Residues 1 to 102 (MEKSGGRIVM…DALVKNTGKE (102 aa)) form a contains beta strands region. A helical transmembrane segment spans residues 103–119 (SLQWGLAAGLYSGITYG).

This sequence belongs to the Tim17/Tim22/Tim23 family. Plastid outer envelope porin OEP16 (TC 1.B.30) subfamily. In terms of assembly, homodimer and oligomers in membrane. Detected in pollen and seeds. Present in leaves and cotyledons.

It localises to the plastid. The protein resides in the chloroplast outer membrane. Its function is as follows. Voltage-dependent high-conductance channel with a slight cation-selectivity; selective for amino acids but excludes triosephosphates or uncharged sugars. Non-essential amino acid-selective channel protein and translocation pore for NADPH:protochlorophyllide oxidoreductase A (PORA) and possibly PORB. The sequence is that of Outer envelope pore protein 16-2, chloroplastic (OEP162) from Arabidopsis thaliana (Mouse-ear cress).